Here is a 644-residue protein sequence, read N- to C-terminus: Exoribonuclease 2 (644 aa).

Residues 189 to 516 form the RNB domain; that stretch reads RQDLTALNFV…NHRLLKAVIK (328 aa). Residues 561 to 643 enclose the S1 motif domain; sequence NTRFAAEIID…ETRSIIARPA (83 aa).

Belongs to the RNR ribonuclease family. RNase II subfamily.

The protein resides in the cytoplasm. It carries out the reaction Exonucleolytic cleavage in the 3'- to 5'-direction to yield nucleoside 5'-phosphates.. Involved in mRNA degradation. Hydrolyzes single-stranded polyribonucleotides processively in the 3' to 5' direction. The polypeptide is Exoribonuclease 2 (Salmonella paratyphi A (strain ATCC 9150 / SARB42)).